The chain runs to 75 residues: UPF0270 protein PputGB1_1339 (75 aa).

This sequence belongs to the UPF0270 family.

The protein is UPF0270 protein PputGB1_1339 of Pseudomonas putida (strain GB-1).